The chain runs to 257 residues: 4-diphosphocytidyl-2-C-methyl-D-erythritol kinase (257 aa).

Lysine 8 is a catalytic residue. Position 91-101 (91-101) interacts with ATP; the sequence is PMGGGLGGGSA. The active site involves aspartate 131.

This sequence belongs to the GHMP kinase family. IspE subfamily.

The catalysed reaction is 4-CDP-2-C-methyl-D-erythritol + ATP = 4-CDP-2-C-methyl-D-erythritol 2-phosphate + ADP + H(+). Its pathway is isoprenoid biosynthesis; isopentenyl diphosphate biosynthesis via DXP pathway; isopentenyl diphosphate from 1-deoxy-D-xylulose 5-phosphate: step 3/6. Catalyzes the phosphorylation of the position 2 hydroxy group of 4-diphosphocytidyl-2C-methyl-D-erythritol. This is 4-diphosphocytidyl-2-C-methyl-D-erythritol kinase from Petrotoga mobilis (strain DSM 10674 / SJ95).